The primary structure comprises 585 residues: Glucose oxidase-like protein fsoC (585 aa).

FAD is bound at residue Ala104. His521 serves as the catalytic Proton donor. Catalysis depends on His564, which acts as the Proton acceptor.

Belongs to the GMC oxidoreductase family. In terms of assembly, monomer. FAD serves as cofactor.

Functionally, glucose oxidase-like protein; part of the gene cluster that mediates the biosynthesis of the enfumafungin-type antibiotic fuscoatroside. Four enzymes are sufficient to produce fuscoatroside: the terpene cyclase-glycosyl transferase fusion protein fsoAthe cytochrome P450 monoxygenases fsoD and fsoE, and the acetyltransferase fsoF; the cytochrome P450 monooxygenase fsoB and the glucose oxidase-like protein fsoC do not seem to play a role in biosynthesis of fuscoatroside. In terms of biological role, glucose oxidase; part of the gene cluster that mediates the biosynthesis of the enfumafungin-type antibiotic, fuscoatroside. This chain is Glucose oxidase-like protein fsoC, found in Humicola fuscoatra.